Here is a 373-residue protein sequence, read N- to C-terminus: Putative aminopeptidase SgcX (373 aa).

Positions 67 and 180 each coordinate a divalent metal cation. The Proton acceptor role is filled by Glu-212. Residues Glu-213, Asp-235, and His-329 each contribute to the a divalent metal cation site.

This sequence belongs to the peptidase M42 family. It depends on a divalent metal cation as a cofactor.

The sequence is that of Putative aminopeptidase SgcX (sgcX) from Escherichia coli (strain K12).